The following is a 97-amino-acid chain: MTEQLKDFDVAEHLTSEEEIQLYLNEILQEDNIELILSALGDIARARNMSQIARDAGISREGLYKALSGTGNPTFATVMKVMKALNLQFQVQQSRFA.

This is an uncharacterized protein from Haemophilus influenzae (strain ATCC 51907 / DSM 11121 / KW20 / Rd).